We begin with the raw amino-acid sequence, 276 residues long: Secreted RxLR effector protein 120 (276 aa).

The first 21 residues, 1–21, serve as a signal peptide directing secretion; it reads MRGAYYVITALLVVASSQTSA. The RxLR-dEER signature appears at 48-65; it reads QSLRGSRDVPDDLAHEER. The tract at residues 97–130 is disordered; it reads GKRPRVAEKDALEKASGADEASKKPRNTATDDAF. Over residues 101–119 the composition is skewed to basic and acidic residues; sequence RVAEKDALEKASGADEASK.

This sequence belongs to the RxLR effector family.

The protein resides in the secreted. The protein localises to the host nucleus. Functionally, secreted effector that completely suppresses the host cell death induced by cell death-inducing proteins. This is Secreted RxLR effector protein 120 from Plasmopara viticola (Downy mildew of grapevine).